Here is a 344-residue protein sequence, read N- to C-terminus: tRNA(Ile)-lysidine synthase (344 aa).

Residue 30–35 (SGGQDS) participates in ATP binding. The disordered stretch occupies residues 323-344 (PPPPAPVPPDPGERSPPPSPLY).

The protein belongs to the tRNA(Ile)-lysidine synthase family.

It localises to the cytoplasm. It catalyses the reaction cytidine(34) in tRNA(Ile2) + L-lysine + ATP = lysidine(34) in tRNA(Ile2) + AMP + diphosphate + H(+). Ligates lysine onto the cytidine present at position 34 of the AUA codon-specific tRNA(Ile) that contains the anticodon CAU, in an ATP-dependent manner. Cytidine is converted to lysidine, thus changing the amino acid specificity of the tRNA from methionine to isoleucine. The sequence is that of tRNA(Ile)-lysidine synthase from Thermosynechococcus vestitus (strain NIES-2133 / IAM M-273 / BP-1).